The chain runs to 674 residues: Multifunctional alkene reductase/demethylase OYE (674 aa).

Positions 62 and 105 each coordinate FMN. The active-site Proton donor is the His175. FMN-binding residues include Arg223 and Lys299. Residues Cys345, Cys351, and Cys358 each contribute to the [4Fe-4S] cluster site. The FAD site is built by Ala391, Gln418, and Arg428.

It in the N-terminal section; belongs to the NADH:flavin oxidoreductase/NADH oxidase family. Requires [4Fe-4S] cluster as cofactor. FAD is required as a cofactor. It depends on FMN as a cofactor.

It catalyses the reaction 3-phenylpropanoate + NAD(+) = (E)-cinnamate + NADH + H(+). The catalysed reaction is N-methyl-L-proline + NAD(+) + H2O = L-proline + formaldehyde + NADH + H(+). Functionally, a member of the 2-enoate reductase subfamily of old yellow enzymes (OYE) able to reduce alpha/beta alkenes near electron-withdrawing groups as well as perform oxidative demethylation chemistry. Prefers NADH over NADPH as cosubstrate. May play a role in osmotic stress response in situ. This chain is Multifunctional alkene reductase/demethylase OYE, found in Caballeronia cordobensis (Burkholderia cordobensis).